We begin with the raw amino-acid sequence, 421 residues long: FAD-dependent monooxygenase atnJ (421 aa).

Residues 9 to 29 (LVPLHVVIVGAGIGGLSAAVA) traverse the membrane as a helical segment. Residues Glu-41 and Ala-54 each contribute to the FAD site. Residue Arg-188 is part of the active site. Residues Asp-303 and Val-316 each coordinate FAD. The disordered stretch occupies residues 371–392 (RDGDAQAARDSQRKATSGTGQN).

Belongs to the paxM FAD-dependent monooxygenase family. FAD is required as a cofactor.

It is found in the membrane. It functions in the pathway secondary metabolite biosynthesis; terpenoid biosynthesis. Its function is as follows. FAD-dependent monooxygenase; part of the gene cluster that mediates the biosynthesis of the meroterpenoids arthripenoids. The pathway begins with the HR-PKS atnH that catalyzes two chain-extension steps to form a reduced triketide, which then primes the SAT domain in the NR-PKS atnG to initiate three more cycles of extension to give a linear hexaketide corresponding to the polyketide part of arthripenoids. The FAD-dependent monooxygenase atnJ then performs an oxidative decarboxylation at C11 of the atnH/atnG product, via an electrophilic aromatic hydroxylation with concomitant ipso-decarboxylation. The membrane-bound polyprenyl transferase atnF then introduces a farnesyl group before the FAD-dependent monooxygenase atnK functions as the first epoxidase on terminal C12'-C13' olefin, followed by a second epoxidation on C7'-C8' catalyzed by atnA. The terpene cyclase/mutase atnI then initiates the sequential tricyclic ring formation through protonation of the terminal epoxide and catalyzes the regioselective and stereoselective 6/6/6-tricyclic ring formation. The cytochrome P450 monooxygenase atnM is responsible for hydroxylating both C1' and C10'. The next steps may involve ketoreduction and acetyl transfer by the ketoreductase atnB and the acetyltransferase atnC, and lead to the production of arthripenoid B, the final biosynthetic product of the atn cluster. The hydroquinone moiety in arthripenoid B is prone to undergo spontaneous oxidation to afford a benzoquinone compound, a key intermediate for generating structure diversity. For instance, addition of a cysteine followed by ring contraction gives arthripenoid A, tautomerization gives the main product arthripenoid C, addition of a molecular of water or amine affords arthripenoid D or E, respectively, and loss of one water forms arthripenoid F. The protein is FAD-dependent monooxygenase atnJ of Arthrinium sp.